The sequence spans 45 residues: Osteocalcin 1 (45 aa).

Positions 1 to 41 (AAGQLSLTQLESLREVCELNLACEHMMDTEGIIAAYTAYYG) constitute a Gla domain. The Ca(2+) site is built by E11, E15, E18, and E24. E11, E15, and E18 each carry 4-carboxyglutamate. The cysteines at positions 17 and 23 are disulfide-linked.

It belongs to the osteocalcin/matrix Gla protein family. Post-translationally, gamma-carboxyglutamate residues are formed by vitamin K dependent carboxylation by GGCX. These residues are essential for the binding of calcium.

It is found in the secreted. Functionally, the carboxylated form is one of the main organic components of the bone matrix, which constitutes 1-2% of the total bone protein. The carboxylated form binds strongly to apatite and calcium. The polypeptide is Osteocalcin 1 (Diplodus sargus (White seabream)).